The chain runs to 288 residues: Glycine--tRNA ligase alpha subunit (288 aa).

The protein belongs to the class-II aminoacyl-tRNA synthetase family. In terms of assembly, tetramer of two alpha and two beta subunits.

The protein localises to the cytoplasm. It catalyses the reaction tRNA(Gly) + glycine + ATP = glycyl-tRNA(Gly) + AMP + diphosphate. In Rickettsia canadensis (strain McKiel), this protein is Glycine--tRNA ligase alpha subunit.